A 142-amino-acid polypeptide reads, in one-letter code: uncharacterized protein (142 aa).

It belongs to the GlcG family.

This is an uncharacterized protein from Citrobacter freundii.